Consider the following 138-residue polypeptide: Large ribosomal subunit protein uL16 (138 aa).

Basic residues predominate over residues 1-13; that stretch reads MLQPARRKYRKEQ. Positions 1-22 are disordered; that stretch reads MLQPARRKYRKEQKGRNTGVAT.

This sequence belongs to the universal ribosomal protein uL16 family. In terms of assembly, part of the 50S ribosomal subunit.

In terms of biological role, binds 23S rRNA and is also seen to make contacts with the A and possibly P site tRNAs. This Polaromonas naphthalenivorans (strain CJ2) protein is Large ribosomal subunit protein uL16.